Consider the following 129-residue polypeptide: Iron-sulfur cluster assembly 1 homolog, mitochondrial (129 aa).

The transit peptide at 1–12 directs the protein to the mitochondrion; that stretch reads MSASLVRATVRA. Fe cation is bound by residues cysteine 57, cysteine 121, and cysteine 123.

This sequence belongs to the HesB/IscA family. In terms of assembly, interacts with CRY2, but not with CRY1 (in vitro).

The protein resides in the mitochondrion. Its function is as follows. Involved in the maturation of mitochondrial 4Fe-4S proteins functioning late in the iron-sulfur cluster assembly pathway. Probably involved in the binding of an intermediate of Fe/S cluster assembly. The polypeptide is Iron-sulfur cluster assembly 1 homolog, mitochondrial (Isca1) (Rattus norvegicus (Rat)).